Consider the following 92-residue polypeptide: Putative membrane protein insertion efficiency factor (92 aa).

Belongs to the UPF0161 family.

It is found in the cell membrane. Functionally, could be involved in insertion of integral membrane proteins into the membrane. The sequence is that of Putative membrane protein insertion efficiency factor from Tropheryma whipplei (strain TW08/27) (Whipple's bacillus).